Here is a 37-residue protein sequence, read N- to C-terminus: Cytochrome b6-f complex subunit 5 (37 aa).

A helical transmembrane segment spans residues L5–A25.

Belongs to the PetG family. The 4 large subunits of the cytochrome b6-f complex are cytochrome b6, subunit IV (17 kDa polypeptide, PetD), cytochrome f and the Rieske protein, while the 4 small subunits are PetG, PetL, PetM and PetN. The complex functions as a dimer.

It localises to the plastid. The protein localises to the chloroplast thylakoid membrane. Functionally, component of the cytochrome b6-f complex, which mediates electron transfer between photosystem II (PSII) and photosystem I (PSI), cyclic electron flow around PSI, and state transitions. PetG is required for either the stability or assembly of the cytochrome b6-f complex. This chain is Cytochrome b6-f complex subunit 5, found in Chlamydomonas moewusii (Chlamydomonas eugametos).